The chain runs to 283 residues: Non-selective voltage-gated ion channel VDAC3 (283 aa).

N-acetylcysteine is present on Cys2. Thr4 carries the post-translational modification Phosphothreonine. 3 positions are modified to N6-acetyllysine: Lys12, Lys15, and Lys20. 2 beta stranded membrane passes run 26-35 (MVKIDLRTKS) and 39-47 (VEFSTSGHA). Residue Lys53 forms a Glycyl lysine isopeptide (Lys-Gly) (interchain with G-Cter in ubiquitin) linkage. The next 3 beta stranded transmembrane spans lie at 54–64 (ASGNLETKYKV), 69–76 (LTFTQKWN), and 80–89 (TLGTEISLEN). Lys90 carries the post-translational modification N6-acetyllysine. Residues 95–104 (LKLTLDTIFV) form a beta stranded membrane-spanning segment. Residues Lys109 and Lys110 each participate in a glycyl lysine isopeptide (Lys-Gly) (interchain with G-Cter in ubiquitin) cross-link. 10 beta stranded membrane passes run 111–120 (SGKLKASYKR), 123–130 (FSLGSNVD), 137–145 (TIYGWAVLA), 150–158 (LAGYQMSFD), 163–175 (KLSQ…GYKA), 178–185 (FQLHTHVN), 189–198 (EFGGSIYQKV), 202–211 (IETSINLAWT), 218–227 (RFGIAAKYKL), and 231–238 (TSLSAKVN). Phosphoserine is present on Ser241. Residues 242–244 (LIG) and 260–264 (SALID) each bind NAD(+). Transmembrane regions (beta stranded) follow at residues 242-251 (LIGLGYTQTL) and 254-263 (GVKLTLSALI). Lys266 carries the post-translational modification N6-acetyllysine; alternate. Lys266 is covalently cross-linked (Glycyl lysine isopeptide (Lys-Gly) (interchain with G-Cter in ubiquitin); alternate). Residues 273 to 282 (HKVGLGFELE) traverse the membrane as a beta stranded segment.

The protein belongs to the eukaryotic mitochondrial porin family. In terms of assembly, interacts with ARMC12 in a TBC1D21-dependent manner. Interacts with MISFA. In terms of processing, ubiquitinated by PRKN during mitophagy, leading to its degradation and enhancement of mitophagy. Deubiquitinated by USP30.

Its subcellular location is the mitochondrion outer membrane. It is found in the membrane. The catalysed reaction is chloride(in) = chloride(out). The enzyme catalyses K(+)(in) = K(+)(out). Its function is as follows. Non-selective voltage-gated ion channel that mediates the transport of anions and cations through the mitochondrion outer membrane and plasma membrane. Forms a high-conducting channel with a stable open state and a voltage-induced closure with a mild preference for anions over cations. Involved in male fertility and sperm mitochondrial sheath formation. In Oryctolagus cuniculus (Rabbit), this protein is Non-selective voltage-gated ion channel VDAC3.